Reading from the N-terminus, the 340-residue chain is Phenylalanine--tRNA ligase alpha subunit (340 aa).

A Mg(2+)-binding site is contributed by glutamate 255.

It belongs to the class-II aminoacyl-tRNA synthetase family. Phe-tRNA synthetase alpha subunit type 1 subfamily. As to quaternary structure, tetramer of two alpha and two beta subunits. Requires Mg(2+) as cofactor.

The protein localises to the cytoplasm. The catalysed reaction is tRNA(Phe) + L-phenylalanine + ATP = L-phenylalanyl-tRNA(Phe) + AMP + diphosphate + H(+). The protein is Phenylalanine--tRNA ligase alpha subunit of Syntrophomonas wolfei subsp. wolfei (strain DSM 2245B / Goettingen).